Consider the following 607-residue polypeptide: Arginine decarboxylase (607 aa).

Residue Lys104 is modified to N6-(pyridoxal phosphate)lysine. A substrate-binding site is contributed by 290 to 300 (LDCGGGLGVDY).

It belongs to the Orn/Lys/Arg decarboxylase class-II family. SpeA subfamily. Pyridoxal 5'-phosphate is required as a cofactor. It depends on Mg(2+) as a cofactor.

It carries out the reaction L-arginine + H(+) = agmatine + CO2. The protein operates within amine and polyamine biosynthesis; agmatine biosynthesis; agmatine from L-arginine: step 1/1. This is Arginine decarboxylase (SPE1) from Avena sativa (Oat).